We begin with the raw amino-acid sequence, 406 residues long: Probable mannan endo-1,4-beta-mannosidase C (406 aa).

The N-terminal stretch at 1–20 (MLINFEKVLSLALLAGSVSG) is a signal peptide. A glycan (N-linked (GlcNAc...) asparagine) is linked at N58. W80 provides a ligand contact to substrate. N-linked (GlcNAc...) asparagine glycosylation is found at N86 and N114. N201 lines the substrate pocket. The Proton donor role is filled by E202. Residue Y287 participates in substrate binding. The Nucleophile role is filled by E320. N-linked (GlcNAc...) asparagine glycosylation occurs at N338. W362 contacts substrate.

Belongs to the glycosyl hydrolase 5 (cellulase A) family.

The protein resides in the secreted. The enzyme catalyses Random hydrolysis of (1-&gt;4)-beta-D-mannosidic linkages in mannans, galactomannans and glucomannans.. Functionally, endo-1,4-mannanase, a crucial enzyme for depolymerization of seed galactomannans and wood galactoglucomannans. The sequence is that of Probable mannan endo-1,4-beta-mannosidase C (manC) from Aspergillus terreus (strain NIH 2624 / FGSC A1156).